We begin with the raw amino-acid sequence, 75 residues long: Small ribosomal subunit protein bS18 (75 aa).

It belongs to the bacterial ribosomal protein bS18 family. As to quaternary structure, part of the 30S ribosomal subunit. Forms a tight heterodimer with protein bS6.

Its function is as follows. Binds as a heterodimer with protein bS6 to the central domain of the 16S rRNA, where it helps stabilize the platform of the 30S subunit. The chain is Small ribosomal subunit protein bS18 from Colwellia psychrerythraea (strain 34H / ATCC BAA-681) (Vibrio psychroerythus).